We begin with the raw amino-acid sequence, 143 residues long: Nucleoside diphosphate kinase (143 aa).

Residues Lys-11, Phe-59, Arg-87, Thr-93, Arg-104, and Asn-114 each coordinate ATP. The Pros-phosphohistidine intermediate role is filled by His-117.

The protein belongs to the NDK family. Homotetramer. It depends on Mg(2+) as a cofactor.

The protein resides in the cytoplasm. It catalyses the reaction a 2'-deoxyribonucleoside 5'-diphosphate + ATP = a 2'-deoxyribonucleoside 5'-triphosphate + ADP. It carries out the reaction a ribonucleoside 5'-diphosphate + ATP = a ribonucleoside 5'-triphosphate + ADP. Major role in the synthesis of nucleoside triphosphates other than ATP. The ATP gamma phosphate is transferred to the NDP beta phosphate via a ping-pong mechanism, using a phosphorylated active-site intermediate. This chain is Nucleoside diphosphate kinase, found in Colwellia psychrerythraea (strain 34H / ATCC BAA-681) (Vibrio psychroerythus).